We begin with the raw amino-acid sequence, 154 residues long: Nitrogen regulatory protein (154 aa).

The 145-residue stretch at 6 to 150 (QILTPGRSLV…EALYQIVVDV (145 aa)) folds into the PTS EIIA type-2 domain. Residue histidine 68 is the Tele-phosphohistidine intermediate of the active site.

The protein localises to the cytoplasm. Functionally, seems to have a role in regulating nitrogen assimilation. This Pseudomonas aeruginosa (strain ATCC 15692 / DSM 22644 / CIP 104116 / JCM 14847 / LMG 12228 / 1C / PRS 101 / PAO1) protein is Nitrogen regulatory protein (ptsN).